A 334-amino-acid chain; its full sequence is D-fructose 1,6-bisphosphatase class 2/sedoheptulose 1,7-bisphosphatase (334 aa).

Positions 33, 57, 85, and 88 each coordinate Mn(2+). Residues 88 to 90 (EGT), Tyr-119, 164 to 166 (RAR), and 186 to 188 (DGD) contribute to the substrate site. Position 213 (Glu-213) interacts with Mn(2+).

Belongs to the FBPase class 2 family. Homotetramer. It depends on Mn(2+) as a cofactor.

It catalyses the reaction beta-D-fructose 1,6-bisphosphate + H2O = beta-D-fructose 6-phosphate + phosphate. The enzyme catalyses D-sedoheptulose 1,7-bisphosphate + H2O = D-sedoheptulose 7-phosphate + phosphate. It functions in the pathway carbohydrate biosynthesis; Calvin cycle. Functionally, catalyzes the hydrolysis of fructose 1,6-bisphosphate (Fru 1,6-P2) and sedoheptulose 1,7-bisphosphate (Sed 1,7-P2) to fructose 6-phosphate and sedoheptulose 7-phosphate, respectively. This is D-fructose 1,6-bisphosphatase class 2/sedoheptulose 1,7-bisphosphatase from Synechococcus sp. (strain CC9605).